The primary structure comprises 82 residues: Three-finger toxin MALT0063C (82 aa).

The signal sequence occupies residues Met-1–Ser-21. 4 disulfide bridges follow: Cys-24/Cys-42, Cys-35/Cys-60, Cys-64/Cys-72, and Cys-73/Cys-78.

Belongs to the three-finger toxin family. Short-chain subfamily. Expressed by the venom gland.

It is found in the secreted. This chain is Three-finger toxin MALT0063C, found in Micrurus altirostris (Uruguayan coral snake).